Consider the following 193-residue polypeptide: Cysteine and glycine-rich protein 2 (193 aa).

The LIM zinc-binding 1 domain occupies 10 to 61; it reads CGACGRTVYHAEEVQCDGRSFHRCCFLCMVCRKNLDSTTVAIHDEEIYCKSC. Positions 64–69 match the Nuclear localization signal motif; that stretch reads KKYGPK. Lys91 is covalently cross-linked (Glycyl lysine isopeptide (Lys-Gly) (interchain with G-Cter in SUMO2)). Residues Lys112 and Lys131 each carry the N6-acetyllysine modification. An LIM zinc-binding 2 domain is found at 119 to 170; that stretch reads CSRCGDSVYAAEKIIGAGKPWHKNCFRCAKCGKSLESTTLTEKEGEIYCKGC. Position 137 is an N6-acetyllysine; alternate (Lys137). Lys137 carries the post-translational modification N6-succinyllysine; alternate. Lys161 carries the N6-acetyllysine modification.

In terms of assembly, interacts with KAT14. The LIM domain 1 is necessary and sufficient for this interaction. Interacts with GLRX3.

It localises to the nucleus. In terms of biological role, drastically down-regulated in response to PDGF-BB or cell injury, that promote smooth muscle cell proliferation and dedifferentiation. Seems to play a role in the development of the embryonic vascular system. The protein is Cysteine and glycine-rich protein 2 (Csrp2) of Mus musculus (Mouse).